The primary structure comprises 81 residues: ATP synthase subunit c, chloroplastic (81 aa).

2 helical membrane-spanning segments follow: residues Pro-3–Gly-23 and Leu-53–Ala-73.

The protein belongs to the ATPase C chain family. In terms of assembly, F-type ATPases have 2 components, F(1) - the catalytic core - and F(0) - the membrane proton channel. F(1) has five subunits: alpha(3), beta(3), gamma(1), delta(1), epsilon(1). F(0) has four main subunits: a(1), b(1), b'(1) and c(10-14). The alpha and beta chains form an alternating ring which encloses part of the gamma chain. F(1) is attached to F(0) by a central stalk formed by the gamma and epsilon chains, while a peripheral stalk is formed by the delta, b and b' chains.

It localises to the plastid. The protein localises to the chloroplast thylakoid membrane. Functionally, f(1)F(0) ATP synthase produces ATP from ADP in the presence of a proton or sodium gradient. F-type ATPases consist of two structural domains, F(1) containing the extramembraneous catalytic core and F(0) containing the membrane proton channel, linked together by a central stalk and a peripheral stalk. During catalysis, ATP synthesis in the catalytic domain of F(1) is coupled via a rotary mechanism of the central stalk subunits to proton translocation. In terms of biological role, key component of the F(0) channel; it plays a direct role in translocation across the membrane. A homomeric c-ring of between 10-14 subunits forms the central stalk rotor element with the F(1) delta and epsilon subunits. The protein is ATP synthase subunit c, chloroplastic of Angiopteris evecta (Mule's foot fern).